Reading from the N-terminus, the 179-residue chain is MFDDPSKRLTYFEYAVGVLLCSWPVMKQAVEEEWADVDTADKRDWMAGVLVDYITVTSDVEAWDVEELILQVLQDEFNVGSIEDDSPYILAQDLVNVWKAACEDNYEPIREIHERLGKQLLEKEEGKEKTREESNPPVLVEDETIVDAEDGGAAQNQQEKQQGPIVDDDGFTVVQKRRR.

Over residues 123–134 the composition is skewed to basic and acidic residues; that stretch reads KEEGKEKTREES. The disordered stretch occupies residues 123-179; sequence KEEGKEKTREESNPPVLVEDETIVDAEDGGAAQNQQEKQQGPIVDDDGFTVVQKRRR. A compositionally biased stretch (acidic residues) spans 140 to 150; that stretch reads VEDETIVDAED.

It belongs to the TSR2 family.

Its subcellular location is the cytoplasm. The protein resides in the nucleus. Its function is as follows. Required for 20S pre-rRNA processing. This is Pre-rRNA-processing protein tsr2 (tsr2) from Schizosaccharomyces pombe (strain 972 / ATCC 24843) (Fission yeast).